The chain runs to 440 residues: ATP-dependent protease ATPase subunit HslU (440 aa).

Residues V18, 60–65 (GVGKTE), D254, E319, and R391 each bind ATP.

Belongs to the ClpX chaperone family. HslU subfamily. As to quaternary structure, a double ring-shaped homohexamer of HslV is capped on each side by a ring-shaped HslU homohexamer. The assembly of the HslU/HslV complex is dependent on binding of ATP.

Its subcellular location is the cytoplasm. Its function is as follows. ATPase subunit of a proteasome-like degradation complex; this subunit has chaperone activity. The binding of ATP and its subsequent hydrolysis by HslU are essential for unfolding of protein substrates subsequently hydrolyzed by HslV. HslU recognizes the N-terminal part of its protein substrates and unfolds these before they are guided to HslV for hydrolysis. The polypeptide is ATP-dependent protease ATPase subunit HslU (Cellvibrio japonicus (strain Ueda107) (Pseudomonas fluorescens subsp. cellulosa)).